A 293-amino-acid chain; its full sequence is Acetylglutamate kinase (293 aa).

Substrate-binding positions include 68 to 69 (GG), Arg90, and Asn189.

The protein belongs to the acetylglutamate kinase family. ArgB subfamily.

It localises to the cytoplasm. It catalyses the reaction N-acetyl-L-glutamate + ATP = N-acetyl-L-glutamyl 5-phosphate + ADP. Its pathway is amino-acid biosynthesis; L-arginine biosynthesis; N(2)-acetyl-L-ornithine from L-glutamate: step 2/4. In terms of biological role, catalyzes the ATP-dependent phosphorylation of N-acetyl-L-glutamate. This chain is Acetylglutamate kinase, found in Caldicellulosiruptor saccharolyticus (strain ATCC 43494 / DSM 8903 / Tp8T 6331).